Reading from the N-terminus, the 51-residue chain is Structural protein ORF5a (51 aa).

Residues 11 to 28 (RGLLLAIAFFVVYRAVLF) traverse the membrane as a helical segment.

The protein belongs to the arteriviridae ORF5a protein family. As to quaternary structure, interacts with GP2b and GP4.

Its subcellular location is the virion. The protein localises to the host cell membrane. Its function is as follows. Minor virion component that plays an essential role in virus infectivity. The protein is Structural protein ORF5a of Porcine reproductive and respiratory syndrome virus (strain VR-2332) (PRRSV).